Consider the following 133-residue polypeptide: Ribosome-binding factor A (133 aa).

It belongs to the RbfA family. Monomer. Binds 30S ribosomal subunits, but not 50S ribosomal subunits or 70S ribosomes.

It localises to the cytoplasm. One of several proteins that assist in the late maturation steps of the functional core of the 30S ribosomal subunit. Associates with free 30S ribosomal subunits (but not with 30S subunits that are part of 70S ribosomes or polysomes). Required for efficient processing of 16S rRNA. May interact with the 5'-terminal helix region of 16S rRNA. The polypeptide is Ribosome-binding factor A (Chlamydia muridarum (strain MoPn / Nigg)).